The sequence spans 72 residues: Translation initiation factor IF-1 (72 aa).

One can recognise an S1-like domain in the interval 1–72 (MAKEDVIEMQ…SKGRIVFRAR (72 aa)).

Belongs to the IF-1 family. In terms of assembly, component of the 30S ribosomal translation pre-initiation complex which assembles on the 30S ribosome in the order IF-2 and IF-3, IF-1 and N-formylmethionyl-tRNA(fMet); mRNA recruitment can occur at any time during PIC assembly.

It localises to the cytoplasm. Its function is as follows. One of the essential components for the initiation of protein synthesis. Stabilizes the binding of IF-2 and IF-3 on the 30S subunit to which N-formylmethionyl-tRNA(fMet) subsequently binds. Helps modulate mRNA selection, yielding the 30S pre-initiation complex (PIC). Upon addition of the 50S ribosomal subunit IF-1, IF-2 and IF-3 are released leaving the mature 70S translation initiation complex. The polypeptide is Translation initiation factor IF-1 (Pseudoalteromonas translucida (strain TAC 125)).